A 214-amino-acid chain; its full sequence is MRIILLGAPGAGKGTQAQFIMEKYGIPQISTGDMLRAAVKAGSELGLKAKEIMDAGKLVTDELVIALVKERITQDDCRDGFLLDGFPRTIPQADAMKEAGIKVDYVLEFDVPDDLIVERIVGRRVHAASGRVYHVKFNPPKVEDKDDVTGEDLTIRKDDQEATVRKRLVEYHQQTAPLVSYYRKEADAGNTQYFKLDGTRKVAEVSAELATILG.

10-15 provides a ligand contact to ATP; the sequence is GAGKGT. Residues 30–59 form an NMP region; that stretch reads STGDMLRAAVKAGSELGLKAKEIMDAGKLV. Residues Thr-31, Arg-36, 57-59, 85-88, and Gln-92 each bind AMP; these read KLV and GFPR. The segment at 122–159 is LID; that stretch reads GRRVHAASGRVYHVKFNPPKVEDKDDVTGEDLTIRKDD. ATP is bound by residues Arg-123 and 132 to 133; that span reads VY. Arg-156 and Arg-167 together coordinate AMP. Arg-200 is an ATP binding site.

This sequence belongs to the adenylate kinase family. Monomer.

It localises to the cytoplasm. The catalysed reaction is AMP + ATP = 2 ADP. Its pathway is purine metabolism; AMP biosynthesis via salvage pathway; AMP from ADP: step 1/1. Catalyzes the reversible transfer of the terminal phosphate group between ATP and AMP. Plays an important role in cellular energy homeostasis and in adenine nucleotide metabolism. The polypeptide is Adenylate kinase (Yersinia enterocolitica serotype O:8 / biotype 1B (strain NCTC 13174 / 8081)).